Reading from the N-terminus, the 679-residue chain is Altered inheritance of mitochondria protein 21 (679 aa).

A disordered region spans residues 1–95 (MPSEVTPKVP…EELNNVMNNT (95 aa)). A compositionally biased stretch (basic and acidic residues) spans 9–19 (VPERPSRRKTS). A Phosphothreonine modification is found at threonine 18. Serine 36 carries the phosphoserine modification. Threonine 58 carries the post-translational modification Phosphothreonine. Residue serine 70 is modified to Phosphoserine. Residue threonine 85 is modified to Phosphothreonine. The span at 86–95 (EELNNVMNNT) shows a compositional bias: polar residues. The residue at position 104 (serine 104) is a Phosphoserine. 2 disordered regions span residues 107-522 (SKHN…EKIE) and 548-679 (LMDT…FHSL). Residues 109–119 (HNIHSVSRKKS) show a composition bias toward basic residues. Polar residues-rich tracts occupy residues 133 to 149 (QNGQRSASDNKTSTNPS) and 164 to 178 (SAISPSNSVNKSNNE). Positions 179 to 213 (VTEHSDSEDLTEKQKVHAALDNEAGDGSHFEEKLI) are enriched in basic and acidic residues. 3 positions are modified to phosphoserine: serine 183, serine 206, and serine 231. Basic and acidic residues predominate over residues 243–272 (SDDKAEKFTKHPESSLEELQKHQEQQEEKI). Residue threonine 277 is modified to Phosphothreonine. Position 284 is a phosphoserine (serine 284). Over residues 296–323 (EVNSQPQGPSDTETVIAATSSNVPSQIA) the composition is skewed to polar residues. At serine 324 the chain carries Phosphoserine. Basic and acidic residues-rich tracts occupy residues 339–351 (KKDFEAHVQKEEL) and 372–383 (EESKIPKIPSER). The tract at residues 383–396 (RPKRRAPPPVPKKP) is interaction with SH3 domain of ABP1. Composition is skewed to polar residues over residues 414 to 427 (DLHNNGNSSATTAS) and 437 to 452 (SSITSDTTKADFTSKL). The segment covering 471 to 482 (LEKKLSSPDTES) has biased composition (basic and acidic residues). A compositionally biased stretch (polar residues) spans 483–492 (KLGTQDQSQA). Residues 501 to 512 (RRGRGPRGRKLP) show a composition bias toward basic residues. Threonine 552 bears the Phosphothreonine mark. The span at 556–576 (QAERALDEKSKSIPEEQREQS) shows a compositional bias: basic and acidic residues. Serine 576 is subject to Phosphoserine. The span at 603 to 613 (PLSQLPQTNAV) shows a compositional bias: polar residues. 8 positions are modified to phosphoserine: serine 620, serine 623, serine 625, serine 627, serine 667, serine 671, serine 675, and serine 678. Residues 667–679 (SALHSEEASFHSL) show a composition bias toward basic and acidic residues.

Belongs to the AIM21 family. In terms of assembly, interacts with ribosomes. Interacts with ABP1.

It is found in the cytoplasm. It localises to the cytoskeleton. The protein localises to the actin patch. Its function is as follows. Involved in mitochondrial migration along actin filaments. The chain is Altered inheritance of mitochondria protein 21 (AIM21) from Saccharomyces cerevisiae (strain YJM789) (Baker's yeast).